A 299-amino-acid chain; its full sequence is Taste receptor type 2 member 4 (299 aa).

The Extracellular segment spans residues 1-9 (MLRLFYFSA). Residues 10–30 (IIASVILNFVGIIMNLFITVV) form a helical membrane-spanning segment. Topologically, residues 31–46 (NCKTWVKSHRISSSDR) are cytoplasmic. A helical transmembrane segment spans residues 47–67 (ILFSLGITRFLMLGLFLVNTI). The Extracellular portion of the chain corresponds to 68–81 (YFVSSNTERSVYLS). The chain crosses the membrane as a helical span at residues 82–102 (AFFVLCFMFLDSSSVWFVTLL). Topologically, residues 103 to 131 (NILYCVKITNFQHSVFLLLKRNISPKIPR) are cytoplasmic. The helical transmembrane segment at 132–152 (LLLACVLISAFTTCLYITLSQ) threads the bilayer. Topologically, residues 153–172 (ASPFPELVTTRNNTSFNISE) are extracellular. Residues Asn-164, Asn-165, and Asn-169 are each glycosylated (N-linked (GlcNAc...) asparagine). Residues 173–193 (GILSLVVSLVLSSSLQFIINV) form a helical membrane-spanning segment. Residues 194 to 230 (TSASLLIHSLRRHIQKMQKNATGFWNPQTEAHVGAMK) are Cytoplasmic-facing. Residues 231 to 251 (LMVYFLILYIPYSVATLVQYL) form a helical membrane-spanning segment. Residues 252-262 (PFYAGMDMGTK) lie on the Extracellular side of the membrane. The chain crosses the membrane as a helical span at residues 263 to 283 (SICLIFATLYSPGHSVLIIIT). The Cytoplasmic portion of the chain corresponds to 284–299 (HPKLKTTAKKILCFKK).

It belongs to the G-protein coupled receptor T2R family. In terms of tissue distribution, expressed in subsets of taste receptor cells of the tongue and palate epithelium and exclusively in gustducin-positive cells. Expressed on airway ciliated epithelium.

Its subcellular location is the membrane. It localises to the cell projection. The protein resides in the cilium membrane. Gustducin-coupled receptor for denatonium and N(6)-propyl-2-thiouracil implicated in the perception of bitter compounds in the oral cavity and the gastrointestinal tract. Signals through PLCB2 and the calcium-regulated cation channel TRPM5. In airway epithelial cells, binding of denatonium increases the intracellular calcium ion concentration and stimulates ciliary beat frequency. This is Taste receptor type 2 member 4 (TAS2R4) from Homo sapiens (Human).